The sequence spans 117 residues: Putative membrane protein insertion efficiency factor (117 aa).

It belongs to the UPF0161 family.

It is found in the cell inner membrane. Could be involved in insertion of integral membrane proteins into the membrane. This chain is Putative membrane protein insertion efficiency factor, found in Bartonella bacilliformis (strain ATCC 35685 / KC583 / Herrer 020/F12,63).